The chain runs to 207 residues: Octanoyltransferase (207 aa).

The BPL/LPL catalytic domain maps to 27 to 202 (GETPDELWIV…HLETRLARPQ (176 aa)). Substrate-binding positions include 66-73 (RGGQITYH), 133-135 (SLG), and 146-148 (GLS). C164 functions as the Acyl-thioester intermediate in the catalytic mechanism.

Belongs to the LipB family.

It is found in the cytoplasm. The catalysed reaction is octanoyl-[ACP] + L-lysyl-[protein] = N(6)-octanoyl-L-lysyl-[protein] + holo-[ACP] + H(+). The protein operates within protein modification; protein lipoylation via endogenous pathway; protein N(6)-(lipoyl)lysine from octanoyl-[acyl-carrier-protein]: step 1/2. Catalyzes the transfer of endogenously produced octanoic acid from octanoyl-acyl-carrier-protein onto the lipoyl domains of lipoate-dependent enzymes. Lipoyl-ACP can also act as a substrate although octanoyl-ACP is likely to be the physiological substrate. In Laribacter hongkongensis (strain HLHK9), this protein is Octanoyltransferase.